Here is a 549-residue protein sequence, read N- to C-terminus: Cation/acetate symporter ActP (549 aa).

The next 13 membrane-spanning stretches (helical) occupy residues 33–53, 77–97, 103–123, 148–168, 183–203, 206–226, 262–282, 303–323, 355–375, 404–424, 428–448, 464–484, and 493–513; these read WQAI…TYWA, LAIA…ALVF, GLIY…LIAE, ILSA…QMVG, IAVV…GMLA, WVQI…AFMV, ISAL…PHIL, GFMG…IMLV, LFLG…VAGL, VSKI…VLFE, IAFM…PIIL, GGWL…TIWV, and IFPY…GIWF.

The protein belongs to the sodium:solute symporter (SSF) (TC 2.A.21) family.

The protein resides in the cell inner membrane. Its function is as follows. Transports acetate. This chain is Cation/acetate symporter ActP, found in Escherichia coli O8 (strain IAI1).